Here is a 256-residue protein sequence, read N- to C-terminus: Glutamate racemase (256 aa).

Residues 5 to 6 (DS) and 37 to 38 (YG) contribute to the substrate site. The active-site Proton donor/acceptor is Cys-69. 70–71 (NT) is a substrate binding site. Cys-181 functions as the Proton donor/acceptor in the catalytic mechanism. 182–183 (TH) lines the substrate pocket.

The protein belongs to the aspartate/glutamate racemases family.

It carries out the reaction L-glutamate = D-glutamate. Its pathway is cell wall biogenesis; peptidoglycan biosynthesis. Functionally, provides the (R)-glutamate required for cell wall biosynthesis. The protein is Glutamate racemase of Buchnera aphidicola subsp. Schizaphis graminum (strain Sg).